Consider the following 602-residue polypeptide: Cholinesterase (602 aa).

Residues 1–28 form the signal peptide; that stretch reads MHSKVTIICIRFLFWFLLLCMLIGKSHT. Residues asparagine 45 and asparagine 85 are each glycosylated (N-linked (GlcNAc...) (complex) asparagine). Cysteine 93 and cysteine 120 form a disulfide bridge. Residue tryptophan 110 participates in tacrine binding. Asparagine 134 carries an N-linked (GlcNAc...) (complex) asparagine glycan. A substrate-binding site is contributed by 144 to 145; that stretch reads GG. Serine 226 functions as the Acyl-ester intermediate in the catalytic mechanism. Serine 226 is modified (phosphoserine). Asparagine 269 and asparagine 284 each carry an N-linked (GlcNAc...) (complex) asparagine glycan. Cysteine 280 and cysteine 291 are disulfide-bonded. Catalysis depends on glutamate 353, which acts as the Charge relay system. Asparagine 369 carries an N-linked (GlcNAc...) (complex) asparagine glycan. Cysteine 428 and cysteine 547 are oxidised to a cystine. Histidine 466 lines the tacrine pocket. Histidine 466 acts as the Charge relay system in catalysis. The N-linked (GlcNAc...) (complex) asparagine glycan is linked to asparagine 483. N-linked (GlcNAc...) asparagine glycosylation is found at asparagine 509, asparagine 513, and asparagine 514.

Belongs to the type-B carboxylesterase/lipase family. Homotetramer; disulfide-linked. Dimer of dimers. N-glycosylated. No other PTM detected. The major N-glycan structures are of the complex diantennary type with 1 and 2 N-acetylneuraminic acid molecules (Neu5Ac) making up approximately 33% and 47% of the total N-glycans, respectively. Only low amounts of fucosylated diantennary N-glycans are detected (approximately 2%). Triantennary N-glycans with or without fucose amount to approximately 13%, whereas 5% of the total N-glycans are of the oligomannosidic or hybrid type. In terms of tissue distribution, detected in blood plasma (at protein level). Present in most cells except erythrocytes.

The protein localises to the secreted. It carries out the reaction an acylcholine + H2O = a carboxylate + choline + H(+). Inhibited by mercury. Inhibited by Tabun. Tabun forms a covalent adduct with Ser-226 that becomes irreversible upon aging. Its function is as follows. Esterase with broad substrate specificity. Contributes to the inactivation of the neurotransmitter acetylcholine. Can degrade neurotoxic organophosphate esters. This is Cholinesterase (BCHE) from Homo sapiens (Human).